A 1088-amino-acid polypeptide reads, in one-letter code: DNA-directed RNA polymerase subunit beta (1088 aa).

It belongs to the RNA polymerase beta chain family. In plastids the minimal PEP RNA polymerase catalytic core is composed of four subunits: alpha, beta, beta', and beta''. When a (nuclear-encoded) sigma factor is associated with the core the holoenzyme is formed, which can initiate transcription.

The protein localises to the plastid. It localises to the chloroplast. The enzyme catalyses RNA(n) + a ribonucleoside 5'-triphosphate = RNA(n+1) + diphosphate. Functionally, DNA-dependent RNA polymerase catalyzes the transcription of DNA into RNA using the four ribonucleoside triphosphates as substrates. In Chlorokybus atmophyticus (Soil alga), this protein is DNA-directed RNA polymerase subunit beta.